The chain runs to 201 residues: Large ribosomal subunit protein uL18 (201 aa).

The protein belongs to the universal ribosomal protein uL18 family. In terms of assembly, part of the 50S ribosomal subunit. Contacts the 5S and 23S rRNAs.

In terms of biological role, this is one of the proteins that bind and probably mediate the attachment of the 5S RNA into the large ribosomal subunit, where it forms part of the central protuberance. The polypeptide is Large ribosomal subunit protein uL18 (Thermococcus gammatolerans (strain DSM 15229 / JCM 11827 / EJ3)).